A 537-amino-acid chain; its full sequence is O-phosphoserine--tRNA(Cys) ligase (537 aa).

Substrate contacts are provided by residues 186 to 188, 231 to 233, 273 to 274, and N317; these read HMT, SAS, and YY.

This sequence belongs to the class-II aminoacyl-tRNA synthetase family. O-phosphoseryl-tRNA(Cys) synthetase subfamily. As to quaternary structure, homotetramer. Interacts with SepCysS.

It carries out the reaction tRNA(Cys) + O-phospho-L-serine + ATP = O-phospho-L-seryl-tRNA(Cys) + AMP + diphosphate. Catalyzes the attachment of O-phosphoserine (Sep) to tRNA(Cys). In Methanococcus maripaludis (strain C5 / ATCC BAA-1333), this protein is O-phosphoserine--tRNA(Cys) ligase.